The primary structure comprises 247 residues: 2,3-bisphosphoglycerate-dependent phosphoglycerate mutase (247 aa).

Residues 8 to 15 (RHGESQWN), 21 to 22 (TG), Arg60, 87 to 90 (ERHY), Lys98, 114 to 115 (RR), and 183 to 184 (GN) contribute to the substrate site. Residue His9 is the Tele-phosphohistidine intermediate of the active site. Glu87 acts as the Proton donor/acceptor in catalysis.

This sequence belongs to the phosphoglycerate mutase family. BPG-dependent PGAM subfamily.

The catalysed reaction is (2R)-2-phosphoglycerate = (2R)-3-phosphoglycerate. It participates in carbohydrate degradation; glycolysis; pyruvate from D-glyceraldehyde 3-phosphate: step 3/5. Its function is as follows. Catalyzes the interconversion of 2-phosphoglycerate and 3-phosphoglycerate. This chain is 2,3-bisphosphoglycerate-dependent phosphoglycerate mutase, found in Chlorobaculum parvum (strain DSM 263 / NCIMB 8327) (Chlorobium vibrioforme subsp. thiosulfatophilum).